The following is a 445-amino-acid chain: MSREIVNIQAGQAGNQVGEAFWRMLLAEHGLDDAGMYKGNDPQQIARAGVYFTQVDSSGPTKYVPRSVQVDLESGVCNRLRSGPLGQLFRPDTYFTSDSGAGNNWAKGYYTEGAELIDGILDIVRRQCEATEALQGFQMIHSLGGGTGAGLGSLLLSKLREEYPDRMLSTFSILPAPNVSETVVEPYNSLLSIHQLVDNCDLTICIDNEALYDIAVRTLKIKSPGYKDLNQLIAKVMCGVSTSLRFPGQLNGDLRKLGMNLVPFPRLHFLMPSFAPFYDPKARTFQRLSVSELTSSLFDKKNLLVASDPRFGRYLTAACIFRGKVSSHEAENSVMQLQRKNSNLFVEWIPDNVSVSLCSVPPVGQPQAAVALANSTCMQELFKRNLDQFALMFKRRAFLHWYTGEGMDVMEFTEAESNTQDLISEYQQYQEATVEEEEADIEGEQ.

Residues glutamine 12, glutamate 73, serine 142, glycine 146, threonine 147, glycine 148, asparagine 208, and asparagine 230 each coordinate GTP. Glutamate 73 contacts Mg(2+).

It belongs to the tubulin family. In terms of assembly, dimer of alpha and beta chains. A typical microtubule is a hollow water-filled tube with an outer diameter of 25 nm and an inner diameter of 15 nM. Alpha-beta heterodimers associate head-to-tail to form protofilaments running lengthwise along the microtubule wall with the beta-tubulin subunit facing the microtubule plus end conferring a structural polarity. Microtubules usually have 13 protofilaments but different protofilament numbers can be found in some organisms and specialized cells. Mg(2+) serves as cofactor.

The protein localises to the cytoplasm. The protein resides in the cytoskeleton. In terms of biological role, tubulin is the major constituent of microtubules, a cylinder consisting of laterally associated linear protofilaments composed of alpha- and beta-tubulin heterodimers. Microtubules grow by the addition of GTP-tubulin dimers to the microtubule end, where a stabilizing cap forms. Below the cap, tubulin dimers are in GDP-bound state, owing to GTPase activity of alpha-tubulin. The polypeptide is Tubulin beta-2 chain (TUBB2) (Suillus bovinus (Jersey cow bolete)).